Reading from the N-terminus, the 486-residue chain is Malonate-semialdehyde dehydrogenase (486 aa).

NAD(+) contacts are provided by Phe154, Lys178, Glu181, Arg182, and Ser231. Cys286 (nucleophile) is an active-site residue. Glu386 contacts NAD(+).

Belongs to the aldehyde dehydrogenase family. IolA subfamily. Homotetramer.

It carries out the reaction 3-oxopropanoate + NAD(+) + CoA + H2O = hydrogencarbonate + acetyl-CoA + NADH + H(+). The catalysed reaction is 2-methyl-3-oxopropanoate + NAD(+) + CoA + H2O = propanoyl-CoA + hydrogencarbonate + NADH + H(+). The protein operates within polyol metabolism; myo-inositol degradation into acetyl-CoA; acetyl-CoA from myo-inositol: step 7/7. In terms of biological role, catalyzes the oxidation of malonate semialdehyde (MSA) and methylmalonate semialdehyde (MMSA) into acetyl-CoA and propanoyl-CoA, respectively. Is involved in a myo-inositol catabolic pathway. Bicarbonate, and not CO2, is the end-product of the enzymatic reaction. The protein is Malonate-semialdehyde dehydrogenase of Bacillus pumilus (strain SAFR-032).